The primary structure comprises 203 residues: MANPIEEQLATNLYFDKTFNCEAAKILPGEYYTTNQDIVIVTVLGSCVSACIRDKVSGIGGMNHFMLPEGNPADANNPVSESARYGTYAMEVLINQLLKNGARRENLEAKIFGGGNVLSGFTAINIGEKNAAFVRKYLRDENIRVVGEDLNDIYPRKVYFFPRTGRVLVKKLKQMHNNTLISREESYAKRLKANKVAGEVELF.

The protein belongs to the CheD family.

The enzyme catalyses L-glutaminyl-[protein] + H2O = L-glutamyl-[protein] + NH4(+). Probably deamidates glutamine residues to glutamate on methyl-accepting chemotaxis receptors (MCPs), playing an important role in chemotaxis. The protein is Probable chemoreceptor glutamine deamidase CheD of Methylobacillus flagellatus (strain ATCC 51484 / DSM 6875 / VKM B-1610 / KT).